The following is an 850-amino-acid chain: RPA-related protein RADX (850 aa).

A disordered region spans residues 1-31; it reads MSGESGQPQPGPSHAGLYLEHPERDQAGVPG. Positions 228 to 331 form a DNA-binding region, OB; the sequence is WNSRKNFPAL…LISTMEICLN (104 aa). 2 disordered regions span residues 575 to 612 and 632 to 671; these read EAFW…MGSQ and GPSA…GKSR. Residues 590-608 are compositionally biased toward basic and acidic residues; the sequence is GKEDHCHERGSKRSQDDRP. The span at 643–668 shows a compositional bias: polar residues; sequence PHSSAQMKGSKHNTPSQESSTAYTTG.

It is found in the chromosome. In terms of biological role, single-stranded DNA-binding protein recruited to replication forks to maintain genome stability. Prevents fork collapse by antagonizing the accumulation of RAD51 at forks to ensure the proper balance of fork remodeling and protection without interfering with the capacity of cells to complete homologous recombination of double-strand breaks. This Mus musculus (Mouse) protein is RPA-related protein RADX.